A 212-amino-acid polypeptide reads, in one-letter code: MNLLIIGLPGAGKGTQAAKIVEEFGVAHISTGDMFRAAMANQTEMGRLAKSYIDKGELVPDEVTNGIVKERLAEDDIAEKGFLLDGYPRTIEQAHALDATLEELGLRLDGVINIKVDPSCLVERLSGRIINRKTGETFHKVFNPPVDYKEEDYYQREDDKPETVKRRLDVNMAQGEPILEHYRKLGLVTDIEGNQEITDVFADVEKALLELK.

An ATP-binding site is contributed by 10 to 15 (GAGKGT). Positions 30–59 (STGDMFRAAMANQTEMGRLAKSYIDKGELV) are NMP. AMP is bound by residues Thr-31, Arg-36, 57–59 (ELV), 86–89 (GYPR), and Gln-93. The LID stretch occupies residues 127-159 (GRIINRKTGETFHKVFNPPVDYKEEDYYQREDD). ATP contacts are provided by residues Arg-128 and 137 to 138 (TF). AMP contacts are provided by Arg-156 and Arg-167. Gln-195 serves as a coordination point for ATP.

Belongs to the adenylate kinase family. Monomer.

It localises to the cytoplasm. It carries out the reaction AMP + ATP = 2 ADP. It participates in purine metabolism; AMP biosynthesis via salvage pathway; AMP from ADP: step 1/1. Functionally, catalyzes the reversible transfer of the terminal phosphate group between ATP and AMP. Plays an important role in cellular energy homeostasis and in adenine nucleotide metabolism. This Streptococcus pyogenes serotype M12 (strain MGAS2096) protein is Adenylate kinase.